The primary structure comprises 390 residues: Transcription factor bHLH76 (390 aa).

Positions 147-217 (NVSEDSQSSG…SEKQPSDSLK (71 aa)) are disordered. Residues 207–217 (NSEKQPSDSLK) show a composition bias toward basic and acidic residues. Residues 229–279 (QATNSHSLAERVRREKISERMKFLQDLVPGCDKVTGKAVMLDEIINYVQSL) enclose the bHLH domain.

Homodimer. Interacts with IBH1. Binds reversibly to CRY2 after blue light illumination. In terms of tissue distribution, expressed constitutively in roots, leaves, stems, and flowers.

The protein localises to the nucleus. In terms of biological role, transcriptional activator involved in cell elongation. Regulates the expression of a subset of genes involved in cell expansion by binding to the G-box motif. Binds to chromatin DNA of the FT gene and promotes its expression, and thus triggers flowering in response to blue light. The protein is Transcription factor bHLH76 (BHLH76) of Arabidopsis thaliana (Mouse-ear cress).